The primary structure comprises 180 residues: ATP-dependent protease subunit HslV (180 aa).

Thr7 is an active-site residue. Ala162, Cys165, and Thr168 together coordinate Na(+).

Belongs to the peptidase T1B family. HslV subfamily. In terms of assembly, a double ring-shaped homohexamer of HslV is capped on each side by a ring-shaped HslU homohexamer. The assembly of the HslU/HslV complex is dependent on binding of ATP.

The protein localises to the cytoplasm. The catalysed reaction is ATP-dependent cleavage of peptide bonds with broad specificity.. Allosterically activated by HslU binding. Functionally, protease subunit of a proteasome-like degradation complex believed to be a general protein degrading machinery. The sequence is that of ATP-dependent protease subunit HslV from Dichelobacter nodosus (strain VCS1703A).